Consider the following 361-residue polypeptide: Phosphoserine aminotransferase (361 aa).

R42 is an L-glutamate binding site. Residues 76–77 (AR), W102, T153, D173, and Q196 contribute to the pyridoxal 5'-phosphate site. At K197 the chain carries N6-(pyridoxal phosphate)lysine. 238-239 (NT) serves as a coordination point for pyridoxal 5'-phosphate.

Belongs to the class-V pyridoxal-phosphate-dependent aminotransferase family. SerC subfamily. As to quaternary structure, homodimer. Requires pyridoxal 5'-phosphate as cofactor.

It is found in the cytoplasm. The catalysed reaction is O-phospho-L-serine + 2-oxoglutarate = 3-phosphooxypyruvate + L-glutamate. The enzyme catalyses 4-(phosphooxy)-L-threonine + 2-oxoglutarate = (R)-3-hydroxy-2-oxo-4-phosphooxybutanoate + L-glutamate. Its pathway is amino-acid biosynthesis; L-serine biosynthesis; L-serine from 3-phospho-D-glycerate: step 2/3. It participates in cofactor biosynthesis; pyridoxine 5'-phosphate biosynthesis; pyridoxine 5'-phosphate from D-erythrose 4-phosphate: step 3/5. Functionally, catalyzes the reversible conversion of 3-phosphohydroxypyruvate to phosphoserine and of 3-hydroxy-2-oxo-4-phosphonooxybutanoate to phosphohydroxythreonine. This Yersinia pestis (strain Pestoides F) protein is Phosphoserine aminotransferase.